Consider the following 902-residue polypeptide: MEVNCLTLKDLISPRQTRLDFAVEDAETAQKENIFVDRSRMTPKTPMKNEPIDLSKQRIFTPERSPITPVKLVDRQPQVEPWTPTANLKMLISAASPDIRDREKKKELFRPIENKGDAFVNSLQLDVVGDSAVDDYEKRRPSRKQKSLGLLCQKFLARYPSYPLSTEKTTISLDEVAVSLGVERRRIYDIVNVLESLHLVSRVAKNQYGWHGRHSLPKTLRTLQRLGEEQKYEEQMACLQQKELDLMEYRFGERRKDGSPDPRDQHLLDFSESDYPSSSANSRKDKSLRIMSQKFVMLFLVSKTKIVTLDVAAKILIEESQDTPDHSKFKTKVRRLYDIANVLTSLALIKKVHVTEERGRKPAFKWIGPVDFSSIDEELLDVSASVLPELKKETYGQIRVCAKERLARYGSFNTVQTSEKIQRKVNSEPSSPQGGKQGPAYSLEIGSLAAIYRQKVEDSSQGEAFVNKRAAPPASVLDPTLPVDSEYCVKPLAQPVFSVAQTDLQAFSAQNGLNGQVGVPVPSAASDAETLKSALLASQPLVYVPSTSLFMLYGSVQEALSPESRSEEDGSGSDVPADLSLAPTAQKRLCEERNPLEDDEPAVKRQSREFEDSPLSLVMPKKPSNSTDLAFPVTTGNGRATPLEDACVKGQLPAAEDASGRAVPNGFIASECGNPSRNPDTEKSSNDNEITKDPSLLQYLYVQSPAGLNGFNMLLPGGQTPHAVAPSSAAMPSFGVPCMFLPSPGLGPFPVLYSPAIPGPISSAPGTLPNTGPMNFGLSTLASASHLLISPAAMVNPKSSTLPSADPQLRCQPPLNPNPVMPGSHGVIHPESPGYMRHPVSMVKAEQSPAPATPKSIQRRHRETFFKTPGSLGDPAFRRERNQSRNTSSAQRRLEISSSGPD.

The residue at position 96 (serine 96) is a Phosphoserine. The DNA-binding element occupies 143–212 (RKQKSLGLLC…VAKNQYGWHG (70 aa)). Residues 253-269 (ERRKDGSPDPRDQHLLD) are compositionally biased toward basic and acidic residues. Residues 253 to 283 (ERRKDGSPDPRDQHLLDFSESDYPSSSANSR) are disordered. A DNA-binding region spans residues 283-368 (RKDKSLRIMS…GRKPAFKWIG (86 aa)). Phosphoserine is present on serine 411. Disordered stretches follow at residues 418-439 (SEKI…KQGP), 589-627 (LCEE…SNST), and 665-690 (NGFI…DNEI). 2 stretches are compositionally biased toward basic and acidic residues: residues 589–611 (LCEE…REFE) and 679–690 (PDTEKSSNDNEI). Serine 832 bears the Phosphoserine mark. A disordered region spans residues 844-902 (KAEQSPAPATPKSIQRRHRETFFKTPGSLGDPAFRRERNQSRNTSSAQRRLEISSSGPD). The span at 884 to 902 (SRNTSSAQRRLEISSSGPD) shows a compositional bias: polar residues.

This sequence belongs to the E2F/DP family. In terms of assembly, homodimer and heterodimer: mainly forms homodimers and, to a lesser extent, heterodimers with E2F8. Dimerization is important for DNA-binding. Interacts with HIF1A. Interacts with MN1.

The protein localises to the nucleus. In terms of biological role, atypical E2F transcription factor that participates in various processes such as angiogenesis, polyploidization of specialized cells and DNA damage response. Mainly acts as a transcription repressor that binds DNA independently of DP proteins and specifically recognizes the E2 recognition site 5'-TTTC[CG]CGC-3'. Directly represses transcription of classical E2F transcription factors such as E2F1. Acts as a regulator of S-phase by recognizing and binding the E2-related site 5'-TTCCCGCC-3' and mediating repression of G1/S-regulated genes. Plays a key role in polyploidization of cells in placenta and liver by regulating the endocycle, probably by repressing genes promoting cytokinesis and antagonizing action of classical E2F proteins (E2F1, E2F2 and/or E2F3). Required for placental development by promoting polyploidization of trophoblast giant cells. Also involved in DNA damage response: up-regulated by p53/TP53 following genotoxic stress and acts as a downstream effector of p53/TP53-dependent repression by mediating repression of indirect p53/TP53 target genes involved in DNA replication. Acts as a promoter of sprouting angiogenesis, possibly by acting as a transcription activator: associates with HIF1A, recognizes and binds the VEGFA promoter, which is different from canonical E2 recognition site, and activates expression of the VEGFA gene. Acts as a negative regulator of keratinocyte differentiation. This Rattus norvegicus (Rat) protein is Transcription factor E2F7 (E2f7).